A 555-amino-acid chain; its full sequence is MASKNTYSDFKLATELPAWNQLQSLYEQKGKKLNVKDEFAKDNSRYEKFAKTFVNYDGSKILFDFSKNLVDDEILKSLIQLAKEAKVTSLRDAMFNGEPINFTEGRAVYHVALRNRSLKPMYVDGTNVTPEVDAVLQHMKEFTEEVRSGAWKGYTGKSITDVVNIGIGGSDLGPVMVTEALKHYATNLKVHFVSNIDGTHIAETLKDLDHETTLFLIASKTFTTAETITNATSAKNWFLSKNGGDQSHISKHFAALSTNATEVEKFGIDTKNMFGFENWVGGRYSVWSAIGLSVALYIGFDNFEAFLKGAEAVDKHFVETPLEDNIPLLGGLLSVWYNNFFDAQTHLVAPFDQYLHRFPAYLQQLSMESNGKSVTRGNVFANYSTGSILFGEPATNAQHSFFQLIHQGTKLIPSDFILAAQSHNPIENNLHQKMLASNFFAQAEALMVGKDEEQVKSEGATGGLVPHKVFSGNRPTTSILAQKITPATLGALIAYYEHVTFTEGAIWNINSFDQWGVELGKVLAKVIGSELATDNKISSHDSSTNGLINQFKEWI.

D-glucose 6-phosphate-binding positions include 169–170 (GS), 219–224 (SKTFTT), Gln364, Glu368, His399, and Lys521. Residue Glu368 is the Proton donor of the active site. Residues His399 and Lys521 contribute to the active site.

The protein belongs to the GPI family. In terms of assembly, homodimer.

Its subcellular location is the cytoplasm. The protein resides in the cytosol. It carries out the reaction alpha-D-glucose 6-phosphate = beta-D-fructose 6-phosphate. It functions in the pathway carbohydrate degradation; glycolysis; D-glyceraldehyde 3-phosphate and glycerone phosphate from D-glucose: step 2/4. Functionally, in the cytoplasm, catalyzes the conversion of glucose-6-phosphate to fructose-6-phosphate, the second step in glycolysis, and the reverse reaction during gluconeogenesis. This chain is Glucose-6-phosphate isomerase (RAG2), found in Kluyveromyces lactis (strain ATCC 8585 / CBS 2359 / DSM 70799 / NBRC 1267 / NRRL Y-1140 / WM37) (Yeast).